The chain runs to 307 residues: MTKTIGLLVMAYGTPYKESDIEAYYTDIRHGKKPTEAELQDLKDRYQFIGGLSPLAGTTNRQAESLRDALNQAYDDVEFKLYIGLKHIHPFIEDAVQSMHEDGIDEAVTVVLAPHYSSFSVGSYNTRAQKEADKYGITFKHVEHYYQQPKFIQYWTEKINETLADIPQDEHDKTVLVVSAHSLPKGLIEKNNDPYPNELHETAQLLEQHSNIIHVAEGWQSEGNTGTPWLGPDVQDLTRALYNEHKYEHFIYTPVGFVCEHLEVLYDNDYECKVICDELGVHYHRPKMPDTDPLFIGAIVEEIKNVY.

Residues tyrosine 12, arginine 29, 45–46, serine 53, and tyrosine 124 contribute to the Fe-coproporphyrin III site; that span reads RY. Fe(2+) contacts are provided by histidine 181 and glutamate 263.

It belongs to the ferrochelatase family.

Its subcellular location is the cytoplasm. It carries out the reaction Fe-coproporphyrin III + 2 H(+) = coproporphyrin III + Fe(2+). It participates in porphyrin-containing compound metabolism; protoheme biosynthesis. Involved in coproporphyrin-dependent heme b biosynthesis. Catalyzes the insertion of ferrous iron into coproporphyrin III to form Fe-coproporphyrin III. This chain is Coproporphyrin III ferrochelatase, found in Staphylococcus saprophyticus subsp. saprophyticus (strain ATCC 15305 / DSM 20229 / NCIMB 8711 / NCTC 7292 / S-41).